The sequence spans 405 residues: Serine/threonine-protein kinase 2 (405 aa).

Positions 54–405 constitute a Protein kinase domain; it reads NDDFYHISTG…IFSDWINGGN (352 aa). ATP is bound by residues 60–68 and K84; that span reads ISTGGYGIV. D274 (proton acceptor) is an active-site residue.

The protein belongs to the protein kinase superfamily. Ser/Thr protein kinase family. Poxviruses subfamily. In terms of processing, phosphorylated in vivo. Autophosphorylated in vitro.

The protein resides in the host endoplasmic reticulum. It localises to the host endoplasmic reticulum-Golgi intermediate compartment. The enzyme catalyses L-seryl-[protein] + ATP = O-phospho-L-seryl-[protein] + ADP + H(+). It catalyses the reaction L-threonyl-[protein] + ATP = O-phospho-L-threonyl-[protein] + ADP + H(+). In terms of biological role, essential serine-protein kinase involved in the early stage of virion morphogenesis. The polypeptide is Serine/threonine-protein kinase 2 (OPG054) (Vaccinia virus (strain L-IVP) (VACV)).